The following is a 405-amino-acid chain: Squamosa promoter-binding-like protein 6 (405 aa).

Residues 121-198 form an SBP-type zinc finger; the sequence is NPLCQVYGCS…AGHNERRRKP (78 aa). 8 residues coordinate Zn(2+): cysteine 124, cysteine 129, cysteine 146, histidine 149, cysteine 165, cysteine 168, histidine 172, and cysteine 184. The short motif at 181 to 197 is the Bipartite nuclear localization signal element; that stretch reads KRSCRRRLAGHNERRRK.

Zn(2+) is required as a cofactor.

Its subcellular location is the nucleus. Trans-acting factor that binds specifically to the consensus nucleotide sequence 5'-TNCGTACAA-3'. This is Squamosa promoter-binding-like protein 6 (SPL6) from Arabidopsis thaliana (Mouse-ear cress).